A 1326-amino-acid chain; its full sequence is F-box/WD repeat-containing protein 7 (1326 aa).

Disordered stretches follow at residues 1–58, 123–187, 318–351, 399–549, 615–642, and 797–843; these read MERG…AEVG, DSSS…IEDE, TVSNPSPAASANAAAPEEASTSNSSSTSSSALSR, GSKA…SGCS, RSNPPAASGAGSVGANPTASVRQRRNGS, and TPRS…NPPP. Over residues 9–39 the composition is skewed to polar residues; the sequence is SSESVTSAGERTQSAVTSSTSTWVKSQASTS. The segment covering 165–187 has biased composition (acidic residues); it reads NDDDDDEEPEPEEDDEEELIEDE. Over residues 320 to 348 the composition is skewed to low complexity; the sequence is SNPSPAASANAAAPEEASTSNSSSTSSSA. The span at 403 to 464 shows a compositional bias: polar residues; that stretch reads ANGSGTANSD…KLNLGSSLGA (62 aa). Residues 465–486 are compositionally biased toward low complexity; sequence SSCSQHRSGSSSTSKSMESSTS. Over residues 495 to 504 the composition is skewed to polar residues; the sequence is VYTNTNSNDY. 3 stretches are compositionally biased toward low complexity: residues 510-520, 528-546, and 616-631; these read TTSGSSTSGGS, NVSASVSYSSVGSQTSQES, and SNPPAASGAGSVGANP. Polar residues-rich tracts occupy residues 632-642 and 797-824; these read TASVRQRRNGS and TPRSSQHLGPTAVLSVTPSSHLTSSTPG. T813 bears the Phosphothreonine mark. Position 825 is a phosphoserine (S825). The 47-residue stretch at 889–935 folds into the F-box domain; the sequence is RDFISLLPRELALFVLSYLEPKDLLRAAQTCRSWRFLCDDNLLWKEK. WD repeat units follow at residues 992-1030, 1033-1070, 1073-1110, 1113-1150, 1153-1190, 1193-1232, and 1236-1273; these read GHDDHVITCLQFSGNRIVSGSDDNTLKVWSAVNGKCLRT, GHTGGVWSSQMSGNIIISGSTDRTLKVWDMDSGACVHT, GHTSTVRCMHLHGSKVVSGSRDATLRVWDIEQGSCLHV, GHLAAVRCVQYDGKLIVSGAYDYMVKIWHPERQECLHT, GHTNRVYSLQFDGLHVVSGSLDTSIRVWDVETGNCKHT, GHQSLTSGMELRQNILVSGNADSTVKVWDITTGQCLQTLS, and KHHSAVTCLQFNSRFVVTSSDDGTVKLWDVKTGDFIRN.

As to quaternary structure, part of a SCF E3 ubiquitin-protein ligase complex. Interacts with Myc and puf. Interacts with CycE. Expressed in follicle cell epithelium and imaginal disks, particularly in the morphogenetic furrow.

The protein localises to the nucleus. The protein operates within protein modification; protein ubiquitination. Substrate recognition component of a SCF (SKP1-CUL1-F-box protein) E3 ubiquitin-protein ligase complex which mediates the ubiquitination and subsequent proteasomal degradation of target proteins. Probably recognizes and binds to phosphorylated target proteins. In the wing and eye, negatively regulates cell growth and proliferation by mediating the degradation of Myc and cyclin E, respectively. Required for endocycles, but not mitosis in follicle cell epithelium. This is F-box/WD repeat-containing protein 7 from Drosophila melanogaster (Fruit fly).